Consider the following 1061-residue polypeptide: DNA primase TraC (1061 aa).

Residues 850–938 (PALVIGEGYA…GKAIFPIFAP (89 aa)) enclose the Toprim domain. Residues 1034 to 1061 (EGQRQKVQQLKQQDIEQQEQRQRRARTY) are disordered.

Its function is as follows. Required for autonomous replication in E.coli. Transferred into the recipient cell during bacterial conjugation. Catalyzes the synthesis of short oligoribonucleotide primers with CpA or pCpA at their 5'-termini on a single-stranded template DNA. The polypeptide is DNA primase TraC (traC) (Escherichia coli).